The chain runs to 118 residues: Protein YoeF (118 aa).

The protein is Protein YoeF (yoeF) of Escherichia coli (strain K12).